The primary structure comprises 335 residues: MTLPLLGPMTLSGFAHSWFFLFLFVVAGLVALYILMQLARQRRMLRFANMELLESVAPKRPSRWRHVPAILLVLSLLLFTIAMAGPTHDVRIPRNRAVVMLVIDVSQSMRATDVEPSRMVAAQEAAKQFADELTPGINLGLIAYAGTATVLVSPTTNREATKNALDKLQFADRTATGEAIFTALQAIATVGAVIGGGDTPPPARIVLFSDGKETMPTNPDNPKGAYTAARTAKDQGVPISTISFGTPYGFVEIDDQRQPVPVDDETMKKVAQLSGGNSYNAATLAELRAVYSSLQQQIGYETIKGDASVGWLRLGALALALAALAALLINRRLPT.

A run of 2 helical transmembrane segments spans residues 18–38 and 67–87; these read WFFL…LMQL and VPAI…AGPT. A VWFA domain is found at 98–294; it reads VVMLVIDVSQ…AELRAVYSSL (197 aa). The helical transmembrane segment at 309-329 threads the bilayer; sequence VGWLRLGALALALAALAALLI.

This sequence belongs to the UPF0353 family.

It is found in the cell membrane. The polypeptide is UPF0353 protein BCG_1543 (Mycobacterium bovis (strain BCG / Pasteur 1173P2)).